The chain runs to 37 residues: Potassium channel toxin alpha-KTx 4.8 (37 aa).

Disulfide bonds link Cys-13-Cys-33 and Cys-17-Cys-35.

The protein belongs to the short scorpion toxin superfamily. Potassium channel inhibitor family. Alpha-KTx 04 subfamily. As to expression, expressed by the venom gland.

The protein resides in the secreted. In terms of biological role, reversible blocker of voltage-gated potassium channel Kv1.2/KCNA2 (Kd=65 nM) and calcium-activated potassium channels KCa2.2/KCNN2 (Kd=575 nM) and KCa3.1/KCNN4 (Kd=59 nM). The chain is Potassium channel toxin alpha-KTx 4.8 from Centruroides margaritatus (Central American bark Scorpion).